The primary structure comprises 345 residues: MTILNPITFPVILESLLASNDLTEEQSKFLMNSWLENKIEPVQTGAFLAALRAKGVSGDELSAMAKILQDASTTPSDLPSFDLVDTCGTGGDGANTFNISTGVAFVSAALGVKIAKHGNRSASGKVGSADVLENLGLPLNVSSGKVVEALKKLGITFLFAPSWHPSLVNLAPLRKSLGVRTIFNLLGPLVNPLRPKSQVLGVAKADLLDPMSVALKGMGLKRAVVVHGAGGLDEASLAGANQFRFLDKDVIRSEIIKPGDLGLTQISNESLKGDDLKTNSHILKSLLNGEGNQYHKEVVALNTALVLWVSGTEDDLSSGVKRALDCLNTDKSWLLFEQLRDFLAT.

5-phospho-alpha-D-ribose 1-diphosphate contacts are provided by residues G88, 91 to 92 (GD), T96, 98 to 101 (NIST), 116 to 124 (KHGNRSASG), and S128. G88 contacts anthranilate. S100 contacts Mg(2+). An anthranilate-binding site is contributed by N119. An anthranilate-binding site is contributed by R174. Residues D233 and E234 each contribute to the Mg(2+) site.

This sequence belongs to the anthranilate phosphoribosyltransferase family. As to quaternary structure, homodimer. Requires Mg(2+) as cofactor.

The catalysed reaction is N-(5-phospho-beta-D-ribosyl)anthranilate + diphosphate = 5-phospho-alpha-D-ribose 1-diphosphate + anthranilate. It functions in the pathway amino-acid biosynthesis; L-tryptophan biosynthesis; L-tryptophan from chorismate: step 2/5. Catalyzes the transfer of the phosphoribosyl group of 5-phosphorylribose-1-pyrophosphate (PRPP) to anthranilate to yield N-(5'-phosphoribosyl)-anthranilate (PRA). This is Anthranilate phosphoribosyltransferase from Prochlorococcus marinus (strain NATL1A).